The sequence spans 199 residues: V-type ATP synthase subunit E (199 aa).

The protein belongs to the V-ATPase E subunit family.

In terms of biological role, produces ATP from ADP in the presence of a proton gradient across the membrane. The chain is V-type ATP synthase subunit E from Borreliella afzelii (strain PKo) (Borrelia afzelii).